A 126-amino-acid polypeptide reads, in one-letter code: Fluoride-specific ion channel FluC 1 (126 aa).

3 consecutive transmembrane segments (helical) span residues 37–57 (HWGT…VLAL), 67–87 (IALL…TFVV), and 98–118 (LLAA…AAAA). Residues Gly-77 and Ser-80 each contribute to the Na(+) site.

Belongs to the fluoride channel Fluc/FEX (TC 1.A.43) family.

It localises to the cell inner membrane. It catalyses the reaction fluoride(in) = fluoride(out). Its activity is regulated as follows. Na(+) is not transported, but it plays an essential structural role and its presence is essential for fluoride channel function. Fluoride-specific ion channel. Important for reducing fluoride concentration in the cell, thus reducing its toxicity. This Parasynechococcus marenigrum (strain WH8102) protein is Fluoride-specific ion channel FluC 1.